A 630-amino-acid polypeptide reads, in one-letter code: tRNA uridine 5-carboxymethylaminomethyl modification enzyme MnmG (630 aa).

13–18 (GGGHAG) contacts FAD. Position 273–287 (273–287 (GPRYCPSIEDKIHRF)) interacts with NAD(+).

It belongs to the MnmG family. As to quaternary structure, homodimer. Heterotetramer of two MnmE and two MnmG subunits. It depends on FAD as a cofactor.

It is found in the cytoplasm. Functionally, NAD-binding protein involved in the addition of a carboxymethylaminomethyl (cmnm) group at the wobble position (U34) of certain tRNAs, forming tRNA-cmnm(5)s(2)U34. In Pseudomonas putida (strain GB-1), this protein is tRNA uridine 5-carboxymethylaminomethyl modification enzyme MnmG.